A 319-amino-acid chain; its full sequence is Small ribosomal subunit protein RACK1 (319 aa).

N-acetylalanine is present on Ala2. WD repeat units follow at residues 15–55 (GHNG…QKFG), 63–102 (GHSH…TYQR), 105–145 (GHKS…ATLL), 147–191 (HNDW…IEAD), 194–233 (GHNS…AMYT), 235–275 (SAQD…DDLR), and 284–319 (AAEP…MTAN). Glycyl lysine isopeptide (Lys-Gly) (interchain with G-Cter in ubiquitin) cross-links involve residues Lys46 and Lys53. Thr96 is subject to Phosphothreonine. Residues Lys107, Lys137, and Lys161 each participate in a glycyl lysine isopeptide (Lys-Gly) (interchain with G-Cter in ubiquitin) cross-link. Thr168 is modified (phosphothreonine).

Belongs to the WD repeat G protein beta family. Ribosomal protein RACK1 subfamily. In terms of assembly, component of the small ribosomal subunit (SSU). Mature yeast ribosomes consist of a small (40S) and a large (60S) subunit. The 40S small subunit contains 1 molecule of ribosomal RNA (18S rRNA) and 33 different proteins (encoded by 57 genes). The large 60S subunit contains 3 rRNA molecules (25S, 5.8S and 5S rRNA) and 46 different proteins (encoded by 81 genes). RACK1 is located at the head of the SSU in the vicinity of the mRNA exit channel. RACK1 interacts with the mRNA-binding protein SCP16. RACK1 also exists simultaneously as a homodimer in a cytosolic non-ribosome-bound form.

It is found in the cytoplasm. Component of the ribosome, a large ribonucleoprotein complex responsible for the synthesis of proteins in the cell. The small ribosomal subunit (SSU) binds messenger RNAs (mRNAs) and translates the encoded message by selecting cognate aminoacyl-transfer RNA (tRNA) molecules. The large subunit (LSU) contains the ribosomal catalytic site termed the peptidyl transferase center (PTC), which catalyzes the formation of peptide bonds, thereby polymerizing the amino acids delivered by tRNAs into a polypeptide chain. The nascent polypeptides leave the ribosome through a tunnel in the LSU and interact with protein factors that function in enzymatic processing, targeting, and the membrane insertion of nascent chains at the exit of the ribosomal tunnel. Located at the head of the 40S ribosomal subunit in the vicinity of the mRNA exit channel, RACK1 serves as a scaffold protein that can recruit other proteins to the ribosome. Involved in induction of the ribosome quality control (RQC) pathway; a pathway that degrades nascent peptide chains during problematic translation. Involved in the negative regulation of translation of a specific subset of proteins. This is Small ribosomal subunit protein RACK1 from Saccharomyces cerevisiae (strain ATCC 204508 / S288c) (Baker's yeast).